The chain runs to 325 residues: NADH-quinone oxidoreductase subunit H (325 aa).

8 consecutive transmembrane segments (helical) span residues Ile-11–Phe-31, Val-81–Val-101, Ile-114–Gly-134, Leu-154–Phe-174, Ile-186–Val-206, Phe-237–Phe-257, Leu-265–Ile-285, and Val-304–Ala-324.

This sequence belongs to the complex I subunit 1 family. In terms of assembly, NDH-1 is composed of 13 different subunits. Subunits NuoA, H, J, K, L, M, N constitute the membrane sector of the complex.

It is found in the cell inner membrane. The catalysed reaction is a quinone + NADH + 5 H(+)(in) = a quinol + NAD(+) + 4 H(+)(out). NDH-1 shuttles electrons from NADH, via FMN and iron-sulfur (Fe-S) centers, to quinones in the respiratory chain. The immediate electron acceptor for the enzyme in this species is believed to be ubiquinone. Couples the redox reaction to proton translocation (for every two electrons transferred, four hydrogen ions are translocated across the cytoplasmic membrane), and thus conserves the redox energy in a proton gradient. This subunit may bind ubiquinone. The protein is NADH-quinone oxidoreductase subunit H of Enterobacter sp. (strain 638).